A 254-amino-acid chain; its full sequence is 3-deoxy-manno-octulosonate cytidylyltransferase (254 aa).

It belongs to the KdsB family.

The protein localises to the cytoplasm. It carries out the reaction 3-deoxy-alpha-D-manno-oct-2-ulosonate + CTP = CMP-3-deoxy-beta-D-manno-octulosonate + diphosphate. It functions in the pathway nucleotide-sugar biosynthesis; CMP-3-deoxy-D-manno-octulosonate biosynthesis; CMP-3-deoxy-D-manno-octulosonate from 3-deoxy-D-manno-octulosonate and CTP: step 1/1. Its pathway is bacterial outer membrane biogenesis; lipopolysaccharide biosynthesis. In terms of biological role, activates KDO (a required 8-carbon sugar) for incorporation into bacterial lipopolysaccharide in Gram-negative bacteria. This is 3-deoxy-manno-octulosonate cytidylyltransferase from Pseudomonas putida (strain W619).